A 281-amino-acid chain; its full sequence is Elongation factor 1-delta (281 aa).

Residue Ala-2 is modified to N-acetylalanine. Lys-17 carries the post-translational modification N6-acetyllysine. Residues Ser-37, Glu-40, Ser-44, and Ser-60 each carry the phosphoserine modification. Thr-73 bears the Phosphothreonine mark. Residues 80–115 form a leucine-zipper region; sequence LVVRIASLEVENQSLRGVVQELQQAISKLEARLNVL. 4 positions are modified to phosphoserine: Ser-86, Asn-91, Leu-94, and Ser-106. Lys-107 carries the N6-acetyllysine modification. Lys-117 carries the post-translational modification N6-acetyllysine; alternate. Residue Lys-117 is modified to N6-succinyllysine; alternate. The disordered stretch occupies residues 118–172; it reads SSPGHRATAPQTQHVSPMRQVEPPAKKPATPAEDDEDDDIDLFGSDNEEEDKEAA. Ser-119 carries the post-translational modification Phosphoserine. A Phosphothreonine modification is found at Thr-129. Ser-133 is subject to Phosphoserine. Position 147 is a phosphothreonine (Thr-147). Residues 149-169 show a composition bias toward acidic residues; the sequence is AEDDEDDDIDLFGSDNEEEDK. Ser-162 is subject to Phosphoserine; by CK2. The catalytic (GEF) stretch occupies residues 173–281; that stretch reads QLREERLRQY…SVDIAAFNKI (109 aa).

Belongs to the EF-1-beta/EF-1-delta family. As to quaternary structure, EF-1 is composed of 4 subunits: alpha, beta, delta isoform 1, and gamma. Isoform 2 interacts with HSF1 and NFE2L2. As to expression, isoform 2 is specifically expressed in brain, cerebellum and testis.

Its subcellular location is the nucleus. Its function is as follows. EF-1-beta and EF-1-delta stimulate the exchange of GDP bound to EF-1-alpha to GTP, regenerating EF-1-alpha for another round of transfer of aminoacyl-tRNAs to the ribosome. Functionally, regulates induction of heat-shock-responsive genes through association with heat shock transcription factors and direct DNA-binding at heat shock promoter elements (HSE). This Homo sapiens (Human) protein is Elongation factor 1-delta (EEF1D).